Here is a 96-residue protein sequence, read N- to C-terminus: MVAPSELEHSMEKMLLTFHKFAGEKNYMNRDDLQKLLDSEFSEFLKNQNDPMTVDKIMKDLDDCRKGQVNFRSYCSLIAGLLIACNEYYVKHMKKR.

The ancestral calcium site stretch occupies residues 62-73 (DDCRKGQVNFRS).

It belongs to the S-100 family. Tetramer of 2 light chains (p10) and 2 heavy chains (annexin II).

In terms of biological role, because p10 induces the dimerization of annexin II (p36), it may function as a regulator of protein phosphorylation in that the p36 monomer is the preferred target (in vitro) of tyrosine-specific kinase. This is Protein S100-A10 (s100a10) from Xenopus laevis (African clawed frog).